Consider the following 128-residue polypeptide: Large ribosomal subunit protein bL12 (128 aa).

This sequence belongs to the bacterial ribosomal protein bL12 family. Homodimer. Part of the ribosomal stalk of the 50S ribosomal subunit. Forms a multimeric L10(L12)X complex, where L10 forms an elongated spine to which 2 to 4 L12 dimers bind in a sequential fashion. Binds GTP-bound translation factors.

Its function is as follows. Forms part of the ribosomal stalk which helps the ribosome interact with GTP-bound translation factors. Is thus essential for accurate translation. The chain is Large ribosomal subunit protein bL12 from Streptomyces antibioticus.